The sequence spans 59 residues: Protein translocase subunit SecE (59 aa).

The chain crosses the membrane as a helical span at residues 35–55; that stretch reads IVAIGIAIIGVVGFIIVLIGE.

The protein belongs to the SecE/SEC61-gamma family. In terms of assembly, component of the Sec protein translocase complex. Heterotrimer consisting of SecY (alpha), SecG (beta) and SecE (gamma) subunits. The heterotrimers can form oligomers, although 1 heterotrimer is thought to be able to translocate proteins. Interacts with the ribosome. May interact with SecDF, and other proteins may be involved.

The protein resides in the cell membrane. In terms of biological role, essential subunit of the Sec protein translocation channel SecYEG. Clamps together the 2 halves of SecY. May contact the channel plug during translocation. This is Protein translocase subunit SecE from Methanobrevibacter smithii (strain ATCC 35061 / DSM 861 / OCM 144 / PS).